The chain runs to 201 residues: Recombination protein RecR (201 aa).

The C4-type zinc-finger motif lies at 60-75 (CKTCGNIDTQNPCTVC). The region spanning 83-178 (SIIVVVADVA…KVTRLAHGVP (96 aa)) is the Toprim domain.

It belongs to the RecR family.

Its function is as follows. May play a role in DNA repair. It seems to be involved in an RecBC-independent recombinational process of DNA repair. It may act with RecF and RecO. The polypeptide is Recombination protein RecR (Rhodopseudomonas palustris (strain HaA2)).